The primary structure comprises 560 residues: Beta-glucosidase 26, peroxisomal (560 aa).

Residues Q33, H137, 182 to 183, Y326, E398, W450, 457 to 458, and Y466 contribute to the a beta-D-glucoside site; these read NE and EW. Residue E183 is the Proton donor of the active site. Residue E398 is the Nucleophile of the active site.

Belongs to the glycosyl hydrolase 1 family.

The protein localises to the peroxisome. It catalyses the reaction Hydrolysis of terminal, non-reducing beta-D-glucosyl residues with release of beta-D-glucose.. Its function is as follows. Possesses beta-glucosidase activity toward 4-methyl-umbelliferyl-beta-D-glucoside in vitro. Possesses myrosinase activity toward indol-3-yl-methylglucosinolate (I3M) and 4-methoxy-indol-3-yl-methylglucosinolate (4MO-I3M) in vivo. Component of an inducible preinvasion resistance mechanism that prevents penetration of the nonhost fungal species B.graminis and E.pisi. Involved in indole glucosinolate (IGS) activation during pattern-triggered immunity (PTI). Functions as a myrosinase for the breakdown of flg22-triggered IGS. Required for both callose deposition and glucosinolate activation during pathogen-triggered resistance. During fungal attack, required for IGS activation that mediates broad-spectrum antifungal defense. This chain is Beta-glucosidase 26, peroxisomal, found in Arabidopsis thaliana (Mouse-ear cress).